Consider the following 89-residue polypeptide: Small ribosomal subunit protein uS15 (89 aa).

It belongs to the universal ribosomal protein uS15 family. Part of the 30S ribosomal subunit. Forms a bridge to the 50S subunit in the 70S ribosome, contacting the 23S rRNA.

In terms of biological role, one of the primary rRNA binding proteins, it binds directly to 16S rRNA where it helps nucleate assembly of the platform of the 30S subunit by binding and bridging several RNA helices of the 16S rRNA. Forms an intersubunit bridge (bridge B4) with the 23S rRNA of the 50S subunit in the ribosome. This chain is Small ribosomal subunit protein uS15, found in Anaeromyxobacter dehalogenans (strain 2CP-1 / ATCC BAA-258).